Consider the following 1025-residue polypeptide: RNA cytidine acetyltransferase (1025 aa).

287–296 (GRGKSAALGL) contacts ATP. Lysine 426 is subject to N6-acetyllysine. Position 470 (arginine 470) interacts with ATP. The 196-residue stretch at 558–753 (CLLPPVPPTQ…HSCIMLKTLT (196 aa)) folds into the N-acetyltransferase domain. Residues 629–631 (IAV) and 636–642 (QGMGYGS) each bind acetyl-CoA. The interval 702 to 1025 (PAERLDYLGV…KKDMKLKRKK (324 aa)) is required for localization to the nucleolus and midbody. Residue threonine 716 is modified to Phosphothreonine. Arginine 725 contributes to the acetyl-CoA binding site. A phosphoserine mark is found at serine 934, serine 984, and serine 987. The tract at residues 990-1025 (SDKKRKLEAKQEPKQSKKLKNRETKNKKDMKLKRKK) is disordered. Basic and acidic residues predominate over residues 997-1018 (EAKQEPKQSKKLKNRETKNKKD).

It belongs to the RNA cytidine acetyltransferase family. NAT10 subfamily. In terms of assembly, part of the small subunit (SSU) processome, composed of more than 70 proteins and the RNA chaperone small nucleolar RNA (snoRNA) U3. Interacts with THUMPD1. Interacts with SUN1 (via N-terminus). Interacts with TERT. In terms of processing, acetylation at Lys-426 is required to activation of rRNA transcription. May be autoacetylated; however ability to autoacetylate in vivo requires additional evidences.

Its subcellular location is the nucleus. The protein localises to the nucleolus. It is found in the midbody. The catalysed reaction is a cytidine in 18S rRNA + acetyl-CoA + ATP + H2O = an N(4)-acetylcytidine in 18S rRNA + ADP + phosphate + CoA + H(+). It carries out the reaction a cytidine in tRNA + acetyl-CoA + ATP + H2O = an N(4)-acetylcytidine in tRNA + ADP + phosphate + CoA + H(+). It catalyses the reaction a cytidine in mRNA + acetyl-CoA + ATP + H2O = an N(4)-acetylcytidine in mRNA + ADP + phosphate + CoA + H(+). With respect to regulation, specifically inhibited by remodelin (4-[2-(2-cyclopentylidenehydrazinyl)-4-thiazolyl]-benzonitrile, monohydrobromide), a hydrobromide salt molecule. Remodelin can improve nuclear architecture, chromatin organization and fitness of cells from patients suffering from Hutchinson-Gilford progeria syndrome (HGPS); molecular mechanisms explaining the relation between NAT10 activity and nuclear architecture are however unclear. RNA cytidine acetyltransferase that catalyzes the formation of N(4)-acetylcytidine (ac4C) modification on mRNAs, 18S rRNA and tRNAs. Catalyzes ac4C modification of a broad range of mRNAs, enhancing mRNA stability and translation. mRNA ac4C modification is frequently present within wobble cytidine sites and promotes translation efficiency. Mediates the formation of ac4C at position 1842 in 18S rRNA. May also catalyze the formation of ac4C at position 1337 in 18S rRNA. Required for early nucleolar cleavages of precursor rRNA at sites A0, A1 and A2 during 18S rRNA synthesis. Catalyzes the formation of ac4C in serine and leucine tRNAs. Requires the tRNA-binding adapter protein THUMPD1 for full tRNA acetyltransferase activity but not for 18S rRNA acetylation. In addition to RNA acetyltransferase activity, also able to acetylate lysine residues of proteins, such as histones, microtubules, p53/TP53 and MDM2, in vitro. The relevance of the protein lysine acetyltransferase activity is however unsure in vivo. Activates telomerase activity by stimulating the transcription of TERT, and may also regulate telomerase function by affecting the balance of telomerase subunit assembly, disassembly, and localization. Involved in the regulation of centrosome duplication by acetylating CENATAC during mitosis, promoting SASS6 proteasome degradation. Part of the small subunit (SSU) processome, first precursor of the small eukaryotic ribosomal subunit. During the assembly of the SSU processome in the nucleolus, many ribosome biogenesis factors, an RNA chaperone and ribosomal proteins associate with the nascent pre-rRNA and work in concert to generate RNA folding, modifications, rearrangements and cleavage as well as targeted degradation of pre-ribosomal RNA by the RNA exosome. The chain is RNA cytidine acetyltransferase from Homo sapiens (Human).